A 964-amino-acid chain; its full sequence is Syndetin (964 aa).

Met1 carries the post-translational modification N-acetylmethionine. The disordered stretch occupies residues 1-25; sequence MQKIKSLMTRQGLKSPPESLNDLGA. Ser15 is subject to Phosphoserine. Coiled-coil stretches lie at residues 81-107 and 216-244; these read LNLQ…VADL and YSCI…LSKI. Phosphoserine is present on residues Ser494, Ser498, Ser559, and Ser561. Residues 532-563 are disordered; it reads DEETEDVLASNGYESDEQEKSAYQDYDSDSDV. Lys963 participates in a covalent cross-link: Glycyl lysine isopeptide (Lys-Gly) (interchain with G-Cter in SUMO1); alternate. A Glycyl lysine isopeptide (Lys-Gly) (interchain with G-Cter in SUMO2); alternate cross-link involves residue Lys963.

The protein belongs to the syndetin family. Component of the endosome-associated retrograde protein (EARP) complex, composed of VPS51, VPS52, VPS53 and VPS50/Syndetin. The EARP complex interacts with EIPR1. Interacts with VPS51 and VPS53 in an EIPR1-independent manner.

It localises to the recycling endosome. The protein resides in the membrane. Functionally, acts as a component of the EARP complex that is involved in endocytic recycling. The EARP complex associates with Rab4-positive endosomes and promotes recycling of internalized transferrin receptor (TFRC) to the plasma membrane. Within the EARP complex, required to tether the complex to recycling endosomes. Not involved in retrograde transport from early and late endosomes to the trans-Golgi network (TGN). The polypeptide is Syndetin (Mus musculus (Mouse)).